A 308-amino-acid chain; its full sequence is tRNA dimethylallyltransferase (308 aa).

Position 14 to 21 (14 to 21 (GPTASGKT)) interacts with ATP. 16–21 (TASGKT) contacts substrate. Interaction with substrate tRNA regions lie at residues 39 to 42 (DSAL), 163 to 167 (QRLSR), and 244 to 249 (RCVGYR).

The protein belongs to the IPP transferase family. In terms of assembly, monomer. Mg(2+) is required as a cofactor.

It carries out the reaction adenosine(37) in tRNA + dimethylallyl diphosphate = N(6)-dimethylallyladenosine(37) in tRNA + diphosphate. Functionally, catalyzes the transfer of a dimethylallyl group onto the adenine at position 37 in tRNAs that read codons beginning with uridine, leading to the formation of N6-(dimethylallyl)adenosine (i(6)A). This Shewanella oneidensis (strain ATCC 700550 / JCM 31522 / CIP 106686 / LMG 19005 / NCIMB 14063 / MR-1) protein is tRNA dimethylallyltransferase.